A 638-amino-acid chain; its full sequence is MASEIHMPGPVCLTENTKGHLVVNSEALEILSAITQPVVVVAIVGLYRTGKSYLMNKLAGKNKGFPLGCTVKSETKGIWMWCVPHPSKPNHTLILLDTEGLGDMEKSDPKSDSWIFALAVLLSSSFVYNSMGTINHQALEQLHYVTELTELIRAKSCPRPDEVEDSSEFVSFFPDFIWTVRDFTLELKLDGHPITEDEYLENALKLISGKNPQIQNSNKPREWIRHFFPKQKCFVFDRPINDKKLLLHVEEVREDQLDSNFQMQSENFCSYIFTHAKTKTLREGILVTGNRLGMLVETYLDAINSGATPCLENAMAVLAQCENSAAVQRAANHYSQQMAQQVRFPTDTLQELLDVHAVCEREAIAVFMEYSFKDKSQEFQKKLVDTMEKKKEDFVLQNEEASAKYCQAELKRLSELLTESISRGTFFVPGGHNIYLEAKKKIEQDYTLVPRKGVKADEVLQSFLQSQVVIEESILQSDKALTAGEKAIAAKQAKKEAAEKEQELLRQKQKEQQQMMEAQERSFQENIAQLKKKMERERENYMRELRKMLSHKMKVLEELLTEGFKEIFESLNEEINRLKEQIEAAENEEPSVFSQILDVAGSIFIAALPGAAKLVDLGMKILSSLCNRLRNPGKKIIS.

The interval M1–C310 is GTPase domain (Globular). The 243-residue stretch at T35–K277 folds into the GB1/RHD3-type G domain. GTP contacts are provided by residues G45–S52, L67–C69, and D97–L101. Residues L311–S638 form an interaction with the CYBA-CYBB complex region. The interval P590–S638 is C-terminal tail; required for its localization to cytoplasmic vesicle.

It belongs to the TRAFAC class dynamin-like GTPase superfamily. GB1/RHD3 GTPase family. GB1 subfamily. In terms of assembly, monomer and dimer. Interacts with CYBA, CYBA-CYBB complex and ATG4B. Interacts (via GB1/RHD3-type G domain) with NCF2 and NCF2-NCF4 complex.

It localises to the cytoplasmic vesicle membrane. It carries out the reaction GTP + H2O = GDP + phosphate + H(+). It catalyses the reaction GDP + H2O = GMP + phosphate + H(+). Its function is as follows. Interferon (IFN)-inducible GTPase that plays important roles in innate immunity against a diverse range of bacterial, viral and protozoan pathogens. Hydrolyzes GTP to GMP in two consecutive cleavage reactions and predominantly uses GTP and not GDP or GMP as the substrate. Following infection, recruited to the pathogen-containing vacuoles or vacuole-escaped bacteria and acts as a positive regulator of inflammasome assembly by promoting the release of inflammasome ligands from bacteria. Acts by promoting lysis of pathogen-containing vacuoles, releasing pathogens into the cytosol. Following pathogen release in the cytosol, promotes recruitment of proteins that mediate bacterial cytolysis: this liberates ligands that are detected by inflammasomes, such as lipopolysaccharide (LPS) that activates the non-canonical CASP4/CASP11 inflammasome or double-stranded DNA (dsDNA) that activates the AIM2 inflammasome. Also promotes IFN-gamma-mediated host defense against bacterial infections by regulating oxidative responses and bacteriolytic peptide generation. May help to assemble NADPH oxidase on phagosomal membranes by acting as a bridging protein between NADPH oxidase cytosolic subunits NCF2-NCF4 and the membrane subunits CYBA-CYBB. Participates along with GBP1 in trafficking monoubiquinated protein cargo to autolysosomes for generating ubiquitin-derived antimicrobial peptides. Facilitates influenza A virus replication by inhibiting the activation of NF-kappaB and JAK-STAT signaling pathways and the expression of type I, type III interferons and pro-inflammatory cytokines. Confers protection to several pathogens, including the bacterial pathogens Listeria monocytogenes and Mycobacterium bovis BCG as well as the protozoan pathogen Toxoplasma gondii. Required for disruption of the parasitophorous vacuole formed following T.gondii infection and subsequent killing of the parasite. The protein is Guanylate-binding protein 7 (GBP7) of Homo sapiens (Human).